Consider the following 358-residue polypeptide: Septin-12 (358 aa).

The disordered stretch occupies residues 1-25; sequence MDPLRRSPSPCLSSQPSSPSTPPCE. Positions 6–18 are enriched in low complexity; that stretch reads RSPSPCLSSQPSS. A Septin-type G domain is found at 46 to 317; that stretch reads MGFEFNIMVV…ENYRVIRLNE (272 aa). The segment at 46-319 is interaction with SEPTIN7; it reads MGFEFNIMVV…YRVIRLNESH (274 aa). Residues 56–63 form a G1 motif region; it reads GQSGLGKS. Residues 56-63, T89, G115, 195-203, G251, and R266 contribute to the GTP site; these read GQSGLGKS and RADSLTMEE. A G3 motif region spans residues 112–115; the sequence is DTPG. The tract at residues 194–197 is G4 motif; the sequence is ARAD. The tract at residues 258–358 is self-association (via N-terminus) to polymerize octameric septin 12-7-6-2/4-2/4-6-7-12 filaments; sequence VNGRCVLGRK…GAHDDSDDEF (101 aa).

Belongs to the TRAFAC class TrmE-Era-EngA-EngB-Septin-like GTPase superfamily. Septin GTPase family. As to quaternary structure, septins polymerize into heterooligomeric protein complexes that form filaments, and can associate with cellular membranes, actin filaments and microtubules. GTPase activity is required for filament formation. Interacts with SEPTIN6 and SEPTIN11. Self-associates. Component of a septin core octameric complex consisting of SEPTIN12, SEPTIN7, SEPTIN6 and SEPTIN2 or SEPTIN4 in the order 12-7-6-2-2-6-7-12 or 12-7-6-4-4-6-7-12 and located in the sperm annulus; the octamer polymerizes into filaments via the SEPTIN12 N- and C-termini; the SEPTIN12:SEPTIN7 association is mediated by the respective GTP-binding domains. Interacts with SPAG4 and LMNB1. Associates with alpha- and beta-tubulins. Widely expressed. Expressed in lymph node.

It is found in the cytoplasm. Its subcellular location is the cytoskeleton. The protein localises to the spindle. It localises to the nucleus. The protein resides in the cell projection. It is found in the cilium. Its subcellular location is the flagellum. In terms of biological role, filament-forming cytoskeletal GTPase. Involved in spermatogenesis. Involved in the morphogenesis of sperm heads and the elongation of sperm tails probably implicating the association with alpha- and beta-tubulins. Forms a filamentous structure with SEPTIN7, SEPTIN6, SEPTIN2 and probably SEPTIN4 at the sperm annulus which is required for the structural integrity and motility of the sperm tail during postmeiotic differentiation. May play a role in cytokinesis (Potential). The chain is Septin-12 from Homo sapiens (Human).